The following is a 206-amino-acid chain: Uridine kinase (206 aa).

Position 9 to 16 (9 to 16) interacts with ATP; it reads GGSGSGKT.

The protein belongs to the uridine kinase family.

The protein localises to the cytoplasm. It carries out the reaction uridine + ATP = UMP + ADP + H(+). The catalysed reaction is cytidine + ATP = CMP + ADP + H(+). Its pathway is pyrimidine metabolism; CTP biosynthesis via salvage pathway; CTP from cytidine: step 1/3. It functions in the pathway pyrimidine metabolism; UMP biosynthesis via salvage pathway; UMP from uridine: step 1/1. This Borrelia hermsii (strain HS1 / DAH) protein is Uridine kinase.